The sequence spans 98 residues: Cystatin-B (98 aa).

Met-1 carries the post-translational modification N-acetylmethionine. The Secondary area of contact signature appears at Gln-46–Gly-50.

The protein belongs to the cystatin family. As to quaternary structure, able to form dimers stabilized by noncovalent forces.

The protein localises to the cytoplasm. It localises to the nucleus. Its function is as follows. This is an intracellular thiol proteinase inhibitor. Tightly binding reversible inhibitor of cathepsins L, H and B. The chain is Cystatin-B (CSTB) from Pongo pygmaeus (Bornean orangutan).